Consider the following 157-residue polypeptide: Lipoprotein signal peptidase (157 aa).

4 consecutive transmembrane segments (helical) span residues 10-30 (LVFMGGFFLIFGVDQAIKYAI), 38-58 (SLMVDIVLVFNKGVAFSLLSF), 59-79 (LEGGLKYLQILLILGLFIFLI), and 84-104 (LFKTHAIEFGMVFGAGVSNVL). Residues D114 and D131 contribute to the active site. Residues 122 to 142 (FDFAIFNFADVMIDVGVGVLL) form a helical membrane-spanning segment.

This sequence belongs to the peptidase A8 family.

It localises to the cell inner membrane. It catalyses the reaction Release of signal peptides from bacterial membrane prolipoproteins. Hydrolyzes -Xaa-Yaa-Zaa-|-(S,diacylglyceryl)Cys-, in which Xaa is hydrophobic (preferably Leu), and Yaa (Ala or Ser) and Zaa (Gly or Ala) have small, neutral side chains.. The protein operates within protein modification; lipoprotein biosynthesis (signal peptide cleavage). In terms of biological role, this protein specifically catalyzes the removal of signal peptides from prolipoproteins. This is Lipoprotein signal peptidase from Helicobacter pylori (strain HPAG1).